We begin with the raw amino-acid sequence, 292 residues long: MAAAAAAVAGAGRGGGGGAEPRQERSRARGWAGAERSEGRRMEPGEELEEEDSPGGREDGFTAEHLAAEAMAADMDPWLVFDARMTPATELDAWLAKYPPSQVTRYGDPGSPNSEPVGWIAAYGQGYIPNSGDVQGLQAAWEALQTSGRPVTPGTLRQLAITHQVLSGKWLIHLAPGFKLDHAWAGIARAVVEGRLQVAKVSPRAKEGGRQVICVYTDDFTDRLGVLEADAAIRAAGVKCLLTYKPDVYTYLGIYRANRWHLCPTLYESRFQLGGSARGSRVLDRANNVELT.

Residues 1–10 (MAAAAAAVAG) are compositionally biased toward low complexity. Residues 1–60 (MAAAAAAVAGAGRGGGGGAEPRQERSRARGWAGAERSEGRRMEPGEELEEEDSPGGREDG) form a disordered region. The segment covering 35 to 44 (ERSEGRRMEP) has biased composition (basic and acidic residues).

It belongs to the UPF0696 family.

This Bos taurus (Bovine) protein is UPF0696 protein C11orf68 homolog.